Reading from the N-terminus, the 91-residue chain is PqqA binding protein 1 (91 aa).

Belongs to the PqqD family. Monomer. Interacts with PqqE.

The protein operates within cofactor biosynthesis; pyrroloquinoline quinone biosynthesis. Functionally, functions as a PqqA binding protein and presents PqqA to PqqE, in the pyrroloquinoline quinone (PQQ) biosynthetic pathway. The chain is PqqA binding protein 1 (pqqD1) from Pseudomonas putida (strain ATCC 47054 / DSM 6125 / CFBP 8728 / NCIMB 11950 / KT2440).